The chain runs to 119 residues: Ribosome-binding factor A (119 aa).

The protein belongs to the RbfA family. In terms of assembly, monomer. Binds 30S ribosomal subunits, but not 50S ribosomal subunits or 70S ribosomes.

Its subcellular location is the cytoplasm. Functionally, one of several proteins that assist in the late maturation steps of the functional core of the 30S ribosomal subunit. Associates with free 30S ribosomal subunits (but not with 30S subunits that are part of 70S ribosomes or polysomes). Required for efficient processing of 16S rRNA. May interact with the 5'-terminal helix region of 16S rRNA. In Coxiella burnetii (strain CbuK_Q154) (Coxiella burnetii (strain Q154)), this protein is Ribosome-binding factor A.